A 461-amino-acid polypeptide reads, in one-letter code: Mycosin-3 (461 aa).

Residues 1-25 form the signal peptide; that stretch reads MIRAAFACLAATVVVAGWWTPPAWA. The region spanning 64 to 397 is the Peptidase S8 domain; that stretch reads DPGVPTPSQT…AGNLDAVAAL (334 aa). Active-site charge relay system residues include D95, H126, and S342. The chain crosses the membrane as a helical span at residues 432–452; sequence AFAGAAALSVLVGLTAATVAI.

This sequence belongs to the peptidase S8 family.

The protein resides in the cell membrane. The chain is Mycosin-3 from Mycobacterium tuberculosis (strain ATCC 25618 / H37Rv).